Consider the following 344-residue polypeptide: Dihydroorotase (344 aa).

Positions 14 and 16 each coordinate Zn(2+). Residues 16-18 (HLR) and asparagine 42 each bind substrate. Zn(2+) contacts are provided by lysine 100, histidine 137, and histidine 175. Lysine 100 carries the N6-carboxylysine modification. Histidine 137 contacts substrate. Leucine 220 is a binding site for substrate. Aspartate 248 serves as a coordination point for Zn(2+). Aspartate 248 is a catalytic residue. 2 residues coordinate substrate: histidine 252 and alanine 264.

This sequence belongs to the metallo-dependent hydrolases superfamily. DHOase family. Class II DHOase subfamily. As to quaternary structure, homodimer. The cofactor is Zn(2+).

The catalysed reaction is (S)-dihydroorotate + H2O = N-carbamoyl-L-aspartate + H(+). The protein operates within pyrimidine metabolism; UMP biosynthesis via de novo pathway; (S)-dihydroorotate from bicarbonate: step 3/3. Functionally, catalyzes the reversible cyclization of carbamoyl aspartate to dihydroorotate. The chain is Dihydroorotase from Cupriavidus metallidurans (strain ATCC 43123 / DSM 2839 / NBRC 102507 / CH34) (Ralstonia metallidurans).